Reading from the N-terminus, the 152-residue chain is MKKRLFVLSLILLVALDQLSKFWIVSHIALGEVKPFIPGIVSLTYLQNNGAAFSILQDQQWFFVAITVLVIGYAIYYLATHPHLNIWKQLALLLIISGGIGNFIDRLRLAYVIDMVHLDFVDFAIFNVADSYLTVGVILLVICLWKEEDYGD.

3 consecutive transmembrane segments (helical) span residues 5–25 (LFVLSLILLVALDQLSKFWIV), 61–81 (WFFVAITVLVIGYAIYYLATH), and 84–104 (LNIWKQLALLLIISGGIGNFI). Active-site residues include Asp-114 and Asp-130. A helical membrane pass occupies residues 125–145 (IFNVADSYLTVGVILLVICLW).

The protein belongs to the peptidase A8 family.

The protein resides in the cell membrane. The catalysed reaction is Release of signal peptides from bacterial membrane prolipoproteins. Hydrolyzes -Xaa-Yaa-Zaa-|-(S,diacylglyceryl)Cys-, in which Xaa is hydrophobic (preferably Leu), and Yaa (Ala or Ser) and Zaa (Gly or Ala) have small, neutral side chains.. Its pathway is protein modification; lipoprotein biosynthesis (signal peptide cleavage). In terms of biological role, this protein specifically catalyzes the removal of signal peptides from prolipoproteins. This Streptococcus pyogenes serotype M6 (strain ATCC BAA-946 / MGAS10394) protein is Lipoprotein signal peptidase.